The primary structure comprises 728 residues: Putative auxin response factor 20 (728 aa).

Positions 119-233 (FFEKQLSPAD…ELLVGVRRAP (115 aa)) form a DNA-binding region, TF-B3 1. Low complexity-rich tracts occupy residues 665–689 (PQGSDEEAAAATTSTAHAGDATTSA) and 700–712 (ASSSSSSAPIIPS). Residues 665 to 728 (PQGSDEEAAA…IVNPRDGSQG (64 aa)) form a disordered region.

Belongs to the ARF family. As to quaternary structure, homo and heterodimers.

The protein resides in the nucleus. Functionally, auxin response factors (ARFs) are transcriptional factors that bind specifically to the DNA sequence 5'-TGTCTC-3' found in the auxin-responsive promoter elements (AuxREs). The sequence is that of Putative auxin response factor 20 (ARF20) from Oryza sativa subsp. japonica (Rice).